Consider the following 500-residue polypeptide: MNDFPWLTIIVVFPISAGSLMLFLPHRGNKVNKWYTICICILELLLTTYAFCYNFKMDDPLIQLSEDYKWIDFFDFYWRMGIDGLSIGTILLTGFITTLATLAAFPVTRDSRFFHFLMLAMYSGQIGSFSSRDLLLFFIMWELELIPVYLLLSMWGGKKRLYSATKFILYTAGSSIFLLIGVLGISLYGSNEPTLNLELLANKSYPVTLEILFYIGFLIAFAVKSPIIPLHTWLPDTHGEAHYSTCMLLAGILLKMGAYGLVRINMELLPHAHSMFSPWLLVVGTIQIIYAASTSPGQRNLKKRIAYSSVSHMGFIIIGISSITDPGLNGAILQIISHGFIGAALFFLAGTSYDRIRLVYLDEMGGMAISIPKIFTMFTILSMASLALPGMSGFIAEFIVFFGIITSQKYFLISKIFIIFVMAIGMILTPIYLLSMLRQMFYGYKLINIKNFSFFDSGPRELFLSISILLPIIGIGIYPDFVLSLASDKVESILSNYFYG.

The next 14 helical transmembrane spans lie at 4 to 24 (FPWLTIIVVFPISAGSLMLFL), 35 to 55 (YTICICILELLLTTYAFCYNF), 87 to 107 (IGTILLTGFITTLATLAAFPV), 113 to 130 (FFHFLMLAMYSGQIGSFS), 134 to 154 (LLLFFIMWELELIPVYLLLSM), 167 to 187 (FILYTAGSSIFLLIGVLGISL), 211 to 231 (ILFYIGFLIAFAVKSPIIPLH), 242 to 262 (HYSTCMLLAGILLKMGAYGLV), 272 to 292 (AHSMFSPWLLVVGTIQIIYAA), 305 to 325 (IAYSSVSHMGFIIIGISSITD), 330 to 350 (GAILQIISHGFIGAALFFLAG), 386 to 406 (LALPGMSGFIAEFIVFFGIIT), 416 to 436 (IFIIFVMAIGMILTPIYLLSM), and 462 to 482 (LFLSISILLPIIGIGIYPDFV).

Belongs to the complex I subunit 4 family.

It localises to the plastid. It is found in the chloroplast thylakoid membrane. It carries out the reaction a plastoquinone + NADH + (n+1) H(+)(in) = a plastoquinol + NAD(+) + n H(+)(out). It catalyses the reaction a plastoquinone + NADPH + (n+1) H(+)(in) = a plastoquinol + NADP(+) + n H(+)(out). In Arabidopsis thaliana (Mouse-ear cress), this protein is NAD(P)H-quinone oxidoreductase chain 4, chloroplastic (ndhD).